A 682-amino-acid polypeptide reads, in one-letter code: Protein PilJ (682 aa).

Residues 1 to 14 are Cytoplasmic-facing; that stretch reads MKKINAGNLFAGMR. Residues 15 to 38 form a helical membrane-spanning segment; it reads SSSVIAGLFIVLIVSIVLLFANFA. Over 39–306 the chain is Periplasmic; that stretch reads YLNTQSNHDK…DGFENLAGGR (268 aa). The helical transmembrane segment at 307–333 threads the bilayer; sequence SINLFAGYALGALALASIILIGLVMVR. Residues 334–682 lie on the Cytoplasmic side of the membrane; that stretch reads ETNRRLAETA…FKLPEGVEQA (349 aa). Positions 347 to 398 constitute an HAMP domain; the sequence is DRNQAAILRLLDEIADLADGDLTVAATVTEDFTGAIADSINYSIDQLRELVE. One can recognise a Methyl-accepting transducer domain in the interval 403–639; sequence TAVQVAAAAQ…HISNTMNVIQ (237 aa).

It belongs to the methyl-accepting chemotaxis (MCP) protein family.

It localises to the cell inner membrane. May be a part of a signal-transduction system that regulates twitching motility by controlling pilus function (extension and retraction). This Pseudomonas aeruginosa (strain ATCC 15692 / DSM 22644 / CIP 104116 / JCM 14847 / LMG 12228 / 1C / PRS 101 / PAO1) protein is Protein PilJ (pilJ).